A 136-amino-acid polypeptide reads, in one-letter code: ATP synthase epsilon chain (136 aa).

Belongs to the ATPase epsilon chain family. As to quaternary structure, F-type ATPases have 2 components, CF(1) - the catalytic core - and CF(0) - the membrane proton channel. CF(1) has five subunits: alpha(3), beta(3), gamma(1), delta(1), epsilon(1). CF(0) has three main subunits: a, b and c.

Its subcellular location is the cell inner membrane. Its function is as follows. Produces ATP from ADP in the presence of a proton gradient across the membrane. The sequence is that of ATP synthase epsilon chain from Hydrogenobaculum sp. (strain Y04AAS1).